Here is a 429-residue protein sequence, read N- to C-terminus: Nicotinate phosphoribosyltransferase (429 aa).

3 residues coordinate nicotinate: Tyr-15, Phe-177, and Thr-229. The residue at position 232 (His-232) is a Phosphohistidine; by autocatalysis. Arg-294 provides a ligand contact to nicotinate. Residue Thr-355 participates in 5-phospho-alpha-D-ribose 1-diphosphate binding.

Belongs to the NAPRTase family. In terms of processing, transiently phosphorylated on a His residue during the reaction cycle. Phosphorylation strongly increases the affinity for substrates and increases the rate of nicotinate D-ribonucleotide production. Dephosphorylation regenerates the low-affinity form of the enzyme, leading to product release.

Its subcellular location is the cytoplasm. The protein resides in the nucleus. It catalyses the reaction nicotinate + 5-phospho-alpha-D-ribose 1-diphosphate + ATP + H2O = nicotinate beta-D-ribonucleotide + ADP + phosphate + diphosphate. Its pathway is cofactor biosynthesis; NAD(+) biosynthesis; nicotinate D-ribonucleotide from nicotinate: step 1/1. Its function is as follows. Catalyzes the first step in the biosynthesis of NAD from nicotinic acid, the ATP-dependent synthesis of beta-nicotinate D-ribonucleotide from nicotinate and 5-phospho-D-ribose 1-phosphate. Essential for growth under anaerobic conditions. This is Nicotinate phosphoribosyltransferase (NPT1) from Saccharomyces cerevisiae (strain ATCC 204508 / S288c) (Baker's yeast).